The chain runs to 172 residues: EPIDERMAL PATTERNING FACTOR-like protein 7 (172 aa).

An N-terminal signal peptide occupies residues 1-27; that stretch reads MDHVNPTLFHLKSLSIFTLTLLYISSP. Intrachain disulfides connect cysteine 128-cysteine 159, cysteine 132-cysteine 138, cysteine 135-cysteine 161, and cysteine 147-cysteine 153.

Belongs to the plant cysteine rich small secretory peptide family. Epidermal patterning factor subfamily.

It is found in the secreted. In terms of biological role, controls stomatal patterning. The chain is EPIDERMAL PATTERNING FACTOR-like protein 7 from Arabidopsis thaliana (Mouse-ear cress).